A 285-amino-acid polypeptide reads, in one-letter code: uncharacterized protein (285 aa).

An ATP-grasp domain is found at 107-285 (FLTVDTTIFD…KHHLKRQMIP (179 aa)).

This is an uncharacterized protein from Mycoplasma pneumoniae (strain ATCC 29342 / M129 / Subtype 1) (Mycoplasmoides pneumoniae).